Reading from the N-terminus, the 193-residue chain is Acyl carrier protein phosphodiesterase (193 aa).

The protein belongs to the AcpH family.

The catalysed reaction is holo-[ACP] + H2O = apo-[ACP] + (R)-4'-phosphopantetheine + H(+). Its function is as follows. Converts holo-ACP to apo-ACP by hydrolytic cleavage of the phosphopantetheine prosthetic group from ACP. In Escherichia coli O139:H28 (strain E24377A / ETEC), this protein is Acyl carrier protein phosphodiesterase.